The chain runs to 261 residues: Triosephosphate isomerase (261 aa).

10–12 (NWK) contributes to the substrate binding site. Catalysis depends on His-100, which acts as the Electrophile. Glu-172 functions as the Proton acceptor in the catalytic mechanism. Residues Gly-178, Ser-218, and 239–240 (GG) each bind substrate.

This sequence belongs to the triosephosphate isomerase family. As to quaternary structure, homodimer.

It is found in the cytoplasm. It carries out the reaction D-glyceraldehyde 3-phosphate = dihydroxyacetone phosphate. The protein operates within carbohydrate biosynthesis; gluconeogenesis. It functions in the pathway carbohydrate degradation; glycolysis; D-glyceraldehyde 3-phosphate from glycerone phosphate: step 1/1. Functionally, involved in the gluconeogenesis. Catalyzes stereospecifically the conversion of dihydroxyacetone phosphate (DHAP) to D-glyceraldehyde-3-phosphate (G3P). The sequence is that of Triosephosphate isomerase from Mycolicibacterium vanbaalenii (strain DSM 7251 / JCM 13017 / BCRC 16820 / KCTC 9966 / NRRL B-24157 / PYR-1) (Mycobacterium vanbaalenii).